The following is a 585-amino-acid chain: tRNA-guanine(15) transglycosylase (585 aa).

Asp95 (nucleophile) is an active-site residue. Substrate contacts are provided by Asp130 and Ala196. Positions 279, 281, and 284 each coordinate Zn(2+). The PUA domain occupies Val507 to Glu582.

This sequence belongs to the archaeosine tRNA-ribosyltransferase family. It depends on Zn(2+) as a cofactor.

The enzyme catalyses guanosine(15) in tRNA + 7-cyano-7-deazaguanine = 7-cyano-7-carbaguanosine(15) in tRNA + guanine. It participates in tRNA modification; archaeosine-tRNA biosynthesis. Its function is as follows. Exchanges the guanine residue with 7-cyano-7-deazaguanine (preQ0) at position 15 in the dihydrouridine loop (D-loop) of archaeal tRNAs. The sequence is that of tRNA-guanine(15) transglycosylase from Pyrococcus furiosus (strain ATCC 43587 / DSM 3638 / JCM 8422 / Vc1).